The primary structure comprises 99 residues: uncharacterized protein (99 aa).

The protein localises to the host cytoplasm. This is an uncharacterized protein from Escherichia phage Mu (Bacteriophage Mu).